We begin with the raw amino-acid sequence, 463 residues long: tRNA (guanine(10)-N(2))-methyltransferase TRMT11 (463 aa).

Ala2 carries the post-translational modification N-acetylalanine.

This sequence belongs to the class I-like SAM-binding methyltransferase superfamily. TRM11 methyltransferase family. As to quaternary structure, part of the heterodimeric TRMT11-TRM112 methyltransferase complex; this complex forms an active tRNA methyltransferase, where TRMT112 acts as an activator of the catalytic subunit TRMT11.

The protein localises to the cytoplasm. The enzyme catalyses guanosine(10) in tRNA + S-adenosyl-L-methionine = N(2)-methylguanosine(10) in tRNA + S-adenosyl-L-homocysteine + H(+). Its function is as follows. Catalytic subunit of the TRMT11-TRM112 methyltransferase complex, that specifically mediates the S-adenosyl-L-methionine-dependent N(2)-methylation of guanosine nucleotide at position 10 (m2G10) in tRNAs. This is one of the major tRNA (guanine-N(2))-methyltransferases. This is tRNA (guanine(10)-N(2))-methyltransferase TRMT11 from Homo sapiens (Human).